Here is a 549-residue protein sequence, read N- to C-terminus: Phosphoenolpyruvate carboxykinase (ATP) (549 aa).

250–257 (GLSGTGKT) is a binding site for ATP.

The protein belongs to the phosphoenolpyruvate carboxykinase (ATP) family. In terms of assembly, homotetramer.

It catalyses the reaction oxaloacetate + ATP = phosphoenolpyruvate + ADP + CO2. It participates in carbohydrate biosynthesis; gluconeogenesis. This chain is Phosphoenolpyruvate carboxykinase (ATP) (PCK1), found in Saccharomyces cerevisiae (strain ATCC 204508 / S288c) (Baker's yeast).